We begin with the raw amino-acid sequence, 149 residues long: Transcriptional repressor NrdR (149 aa).

The segment at 3-34 (CPFCFAVDTKVIDSRLVGEGSSVRRRRQCLVC) is a zinc-finger region. One can recognise an ATP-cone domain in the interval 49-139 (PRVVKSNDVR…VYRSFEDIKE (91 aa)).

Belongs to the NrdR family. It depends on Zn(2+) as a cofactor.

Its function is as follows. Negatively regulates transcription of bacterial ribonucleotide reductase nrd genes and operons by binding to NrdR-boxes. This is Transcriptional repressor NrdR from Escherichia fergusonii (strain ATCC 35469 / DSM 13698 / CCUG 18766 / IAM 14443 / JCM 21226 / LMG 7866 / NBRC 102419 / NCTC 12128 / CDC 0568-73).